A 211-amino-acid polypeptide reads, in one-letter code: Mitotic spindle assembly checkpoint protein MAD2B (211 aa).

An HORMA domain is found at 13–203 (QVVADVLSEF…SDILKMQLYV (191 aa)).

As to quaternary structure, homooligomer. Interacts with REV1. Interacts with FZR1 (in complex with the anaphase promoting complex APC). May interact with CDC20. Heterodimer with REV3L. This dimer forms the minimal DNA polymerase zeta complex (Pol-zeta2), with REV3L bearing DNA polymerase catalytic activity, although its activity is very low in this context. Component of the tetrameric Pol-zeta complex (Pol-zeta4), which consists of REV3L, MAD2L2, POLD2 and POLD3; Pol-zeta4 is the fully active form of DNA polymerase zeta. Component of the shieldin complex, consisting of SHLD1, SHLD2, SHLD3 and MAD2L2/REV7. Within the complex, SHLD2 forms a scaffold which interacts with a SHLD3-MAD2L2 subcomplex via its N-terminus, and with SHLD1 via its C-terminus.

It localises to the nucleus. The protein localises to the cytoplasm. The protein resides in the cytoskeleton. It is found in the spindle. Its subcellular location is the chromosome. Adapter protein able to interact with different proteins and involved in different biological processes. Mediates the interaction between the error-prone DNA polymerase zeta catalytic subunit REV3L and the inserter polymerase REV1, thereby mediating the second polymerase switching in translesion DNA synthesis. Translesion DNA synthesis releases the replication blockade of replicative polymerases, stalled in presence of DNA lesions. May also play a role in signal transduction in response to DNA damage. May regulate the activation of the anaphase promoting complex APC thereby regulating progression through the cell cycle. Component of the shieldin complex, which plays an important role in repair of DNA double-stranded breaks (DSBs). During G1 and S phase of the cell cycle, the complex functions downstream of TP53BP1 to promote non-homologous end joining (NHEJ) and suppress DNA end resection. Through transcriptional regulation may play a role in epithelial-mesenchymal transdifferentiation. This Gallus gallus (Chicken) protein is Mitotic spindle assembly checkpoint protein MAD2B (MAD2L2).